The following is a 272-amino-acid chain: 4-hydroxy-tetrahydrodipicolinate reductase (272 aa).

NAD(+) contacts are provided by residues Gly-11 to Met-16 and Glu-37. Residue Arg-38 coordinates NADP(+). NAD(+) is bound by residues Gly-101 to Thr-103 and Ala-125 to Phe-128. The Proton donor/acceptor role is filled by His-158. His-159 provides a ligand contact to (S)-2,3,4,5-tetrahydrodipicolinate. Lys-162 (proton donor) is an active-site residue. Gly-168–Thr-169 serves as a coordination point for (S)-2,3,4,5-tetrahydrodipicolinate.

This sequence belongs to the DapB family. In terms of assembly, homotetramer.

The protein resides in the cytoplasm. It catalyses the reaction (S)-2,3,4,5-tetrahydrodipicolinate + NAD(+) + H2O = (2S,4S)-4-hydroxy-2,3,4,5-tetrahydrodipicolinate + NADH + H(+). It carries out the reaction (S)-2,3,4,5-tetrahydrodipicolinate + NADP(+) + H2O = (2S,4S)-4-hydroxy-2,3,4,5-tetrahydrodipicolinate + NADPH + H(+). It participates in amino-acid biosynthesis; L-lysine biosynthesis via DAP pathway; (S)-tetrahydrodipicolinate from L-aspartate: step 4/4. Functionally, catalyzes the conversion of 4-hydroxy-tetrahydrodipicolinate (HTPA) to tetrahydrodipicolinate. The chain is 4-hydroxy-tetrahydrodipicolinate reductase from Edwardsiella ictaluri (strain 93-146).